The chain runs to 597 residues: DNA polymerase III subunit gamma/tau (597 aa).

44–51 (GERGTGKT) is an ATP binding site. Cysteine 63, cysteine 72, cysteine 75, and cysteine 78 together coordinate Zn(2+).

It belongs to the DnaX/STICHEL family. As to quaternary structure, DNA polymerase III contains a core (composed of alpha, epsilon and theta chains) that associates with a tau subunit. This core dimerizes to form the POLIII' complex. PolIII' associates with the gamma complex (composed of gamma, delta, delta', psi and chi chains) and with the beta chain to form the complete DNA polymerase III complex.

It carries out the reaction DNA(n) + a 2'-deoxyribonucleoside 5'-triphosphate = DNA(n+1) + diphosphate. Functionally, DNA polymerase III is a complex, multichain enzyme responsible for most of the replicative synthesis in bacteria. This DNA polymerase also exhibits 3' to 5' exonuclease activity. This Mycoplasma genitalium (strain ATCC 33530 / DSM 19775 / NCTC 10195 / G37) (Mycoplasmoides genitalium) protein is DNA polymerase III subunit gamma/tau (dnaX).